Consider the following 608-residue polypeptide: Bifunctional dihydrofolate reductase-thymidylate synthase (608 aa).

One can recognise a DHFR domain in the interval 10–228 (DIYAICACCK…TTLDFIIYKK (219 aa)). 14–15 (IC) contacts substrate. An NADP(+)-binding site is contributed by alanine 16. Valine 31 contacts substrate. 39 to 45 (GLGNKGV) serves as a coordination point for NADP(+). Positions 54 and 108 each coordinate substrate. NADP(+) contacts are provided by residues 106 to 108 (RTN), 128 to 130 (SRT), and asparagine 144. Isoleucine 164, tyrosine 170, and threonine 185 together coordinate substrate. 165 to 172 (GGSVVYQE) is a binding site for NADP(+). The segment at 322-608 (YHPEYQYLNI…HEKISMDMAA (287 aa)) is thymidylate synthase. Arginine 345 serves as a coordination point for dUMP. Cysteine 490 is a catalytic residue. Residues histidine 491, 509 to 513 (QRSCD), asparagine 521, and 551 to 553 (HVY) each bind dUMP.

It in the N-terminal section; belongs to the dihydrofolate reductase family. In the C-terminal section; belongs to the thymidylate synthase family. As to quaternary structure, homodimer.

It carries out the reaction (6S)-5,6,7,8-tetrahydrofolate + NADP(+) = 7,8-dihydrofolate + NADPH + H(+). It catalyses the reaction dUMP + (6R)-5,10-methylene-5,6,7,8-tetrahydrofolate = 7,8-dihydrofolate + dTMP. The protein operates within cofactor biosynthesis; tetrahydrofolate biosynthesis; 5,6,7,8-tetrahydrofolate from 7,8-dihydrofolate: step 1/1. Its function is as follows. Bifunctional enzyme. Involved in de novo dTMP biosynthesis. Key enzyme in folate metabolism. Catalyzes an essential reaction for de novo glycine and purine synthesis, DNA precursor synthesis, and for the conversion of dUMP to dTMP. This Plasmodium falciparum (isolate K1 / Thailand) protein is Bifunctional dihydrofolate reductase-thymidylate synthase.